The primary structure comprises 712 residues: Aryl hydrocarbon receptor nuclear translocator 2 (712 aa).

2 disordered regions span residues 1–20 (MATP…PGSV) and 35–74 (MAGA…IERR). Position 42 is an omega-N-methylarginine (Arg-42). The span at 63–73 (FSRENHSEIER) shows a compositional bias: basic and acidic residues. The 54-residue stretch at 63–116 (FSRENHSEIERRRRNKMTQYITELSDMVPTCSALARKPDKLTILRMAVSHMKSM) folds into the bHLH domain. PAS domains are found at residues 134–209 (TEQE…MTGR) and 323–393 (PVCM…VKLK). The 44-residue stretch at 398-441 (SVMYRFRTKNREWLLIRTSSFTFQNPYSDEIEYVICTNTNVKQL) folds into the PAC domain. Residues 573-712 (AWTGSRPPFP…DLGMFPPFSE (140 aa)) form a disordered region. Composition is skewed to low complexity over residues 597 to 626 (SSHP…AYPS) and 653 to 675 (SQWQ…QPGQ).

Efficient DNA binding requires dimerization with another bHLH protein. Heterodimer with NPAS4 or SIM1. Heterodimer with the aryl hydrocarbon receptor (AHR) or the SIM1 protein. Interacts with TACC3.

The protein localises to the nucleus. In terms of biological role, transcription factor that plays a role in the development of the hypothalamo-pituitary axis, postnatal brain growth, and visual and renal function. Specifically recognizes the xenobiotic response element (XRE). The sequence is that of Aryl hydrocarbon receptor nuclear translocator 2 (Arnt2) from Rattus norvegicus (Rat).